Reading from the N-terminus, the 721-residue chain is MTPIQKTATVGGKDILLETGKVAKQAHGSVWVRLGDSIVLVTAVSAAEKKEGIDFFPLTVDYQEKLFAAGRVPGSFFRREGRPTEKETLTSRLVDRSCRPLFAEGYSNETQVIATVISFDQENDTDVLALTGASAALHISDIPFGGPIAGVRVARVGGQLVANPTLAQRAEADLDVVMAASRDAIVMVEGGAQEVSEAVMIEALLFGQAAVQPLLDAQDALRAATGNKARRAFEPPKNDVELRAKVKALTWEKVKEAYGRNEKHDRYGRLSEIKKELLQALKDEAAGDAAKLATIALREKEIKGYYEDVKYDYMRKMITDERRRIGGRGMADIRKITCEVGLLPRVHGSSLFTRGETQALVATTLGTAEDEQRVEMLTGMVFKKFMLHYNFPPFSVGEVKFLRSPGRREIGHGALAERALRAVMPPEDQFPYTVRVVSDIMESNGSSSMASVCGGCLSLMDAGVPIKAPVAGIAMGLIKEGEKIAILSDILGDEDHLGDMDFKVCGTAAGITSIQMDIKIGGVTRDILEQALAQAAEGRKHILGEMAKALSAPRGSISAYAPRITTIKIRPERIKDIIGPGGKTIKDITARTGTSINIEDDGSVSIASPNQDKVEEAIKMIRGLTQEAEVGRIYLGTVRKIAEFGAFVEIFPGTDGLIHISELSDKRVKSVSDVLSEGEEVMVKVISVDRSGKIRLSRKEALADSAKKSEGTEPPKGEPAK.

2 residues coordinate Mg(2+): Asp495 and Asp501. One can recognise a KH domain in the interval 562–621; that stretch reads PRITTIKIRPERIKDIIGPGGKTIKDITARTGTSINIEDDGSVSIASPNQDKVEEAIKMI. The S1 motif domain maps to 631–699; that stretch reads GRIYLGTVRK…RSGKIRLSRK (69 aa). The segment at 699-721 is disordered; it reads KEALADSAKKSEGTEPPKGEPAK.

The protein belongs to the polyribonucleotide nucleotidyltransferase family. Mg(2+) serves as cofactor.

The protein resides in the cytoplasm. It carries out the reaction RNA(n+1) + phosphate = RNA(n) + a ribonucleoside 5'-diphosphate. Its function is as follows. Involved in mRNA degradation. Catalyzes the phosphorolysis of single-stranded polyribonucleotides processively in the 3'- to 5'-direction. The sequence is that of Polyribonucleotide nucleotidyltransferase from Anaeromyxobacter dehalogenans (strain 2CP-1 / ATCC BAA-258).